The following is an 836-amino-acid chain: Glutamate receptor ionotropic, kainate glr-3 (836 aa).

The N-terminal stretch at 1–19 (MFWIAKTLIAFLILLKTDC) is a signal peptide. Over 20–523 (YKIAIPANLI…WFKFMDPLST (504 aa)) the chain is Extracellular. A disulfide bridge connects residues C76 and C320. N-linked (GlcNAc...) asparagine glycans are attached at residues N225, N257, N356, N391, and N419. Residues 478–480 (SLT) and R485 contribute to the L-glutamate site. A helical membrane pass occupies residues 524–544 (QVWIMTFASYFVVSVAIWIIA). At 545-600 (KISPYEQFERDEDNGQYKPVDNQFSLRNSFWFTVCSLMQQGSELCPRAASTRLLTG) the chain is on the cytoplasmic side. A helical membrane pass occupies residues 601–621 (IWWFFALILISSYTANLAAVL). At 622–780 (TTRRMETPIE…KRKDQDDGES (159 aa)) the chain is on the extracellular side. 651 to 652 (ST) contacts L-glutamate. Residue N657 is glycosylated (N-linked (GlcNAc...) asparagine). Position 699 (E699) interacts with L-glutamate. Residues 781 to 801 (IGGIFIILVVGLVLTAVLVIF) form a helical membrane-spanning segment. Over 802 to 836 (ELITTRKPSPAQSQVIRHVNVIPSFKLGFFRWNVN) the chain is Cytoplasmic.

This sequence belongs to the glutamate-gated ion channel (TC 1.A.10.1) family. Expressed in the intestine and in the ASER neuron. Also expressed in the thermosensitive RIA interneuron.

Its subcellular location is the cell membrane. It localises to the postsynaptic cell membrane. Its activity is regulated as follows. Activated by low temperature of 18 degrees Celsius in ASER neuron. In terms of biological role, ionotropic glutamate receptor. Activation by glutamate requires additional verification. L-glutamate acts as an excitatory neurotransmitter at many synapses in the central nervous system. Binding of the excitatory neurotransmitter L-glutamate induces a conformation change, leading to the opening of the cation channel, and thereby converts the chemical signal to an electrical impulse. The receptor then desensitizes rapidly and enters a transient inactive state, characterized by the presence of bound agonist. Its function is as follows. Independent of its ionotropic glutamate receptor activity, acts as a thermoreceptor in the ASER neuron where it triggers a calcium response to activate cold avoidance behavior in response to temperatures below 19 degrees Celsius. Possibly functions as a metabotropic cold receptor and acts upstream of the G(o) G protein goa-1 in the ASER neuron. Also functions in cold sensing in the intestine. This Caenorhabditis elegans protein is Glutamate receptor ionotropic, kainate glr-3.